The primary structure comprises 205 residues: Probable GTP-binding protein EngB (205 aa).

Residues 27-201 form the EngB-type G domain; that stretch reads SGIEIAFAGR…AAKLDSWFAP (175 aa). Residues 35–42, 62–66, 80–83, 147–150, and 180–182 each bind GTP; these read GRSNAGKS, GRTQL, DLPG, TKAD, and FSA. Mg(2+) contacts are provided by S42 and T64.

Belongs to the TRAFAC class TrmE-Era-EngA-EngB-Septin-like GTPase superfamily. EngB GTPase family. It depends on Mg(2+) as a cofactor.

Functionally, necessary for normal cell division and for the maintenance of normal septation. This is Probable GTP-binding protein EngB from Pasteurella multocida (strain Pm70).